Reading from the N-terminus, the 282-residue chain is 2-dehydro-3-deoxyphosphooctonate aldolase (282 aa).

The protein belongs to the KdsA family.

It localises to the cytoplasm. It carries out the reaction D-arabinose 5-phosphate + phosphoenolpyruvate + H2O = 3-deoxy-alpha-D-manno-2-octulosonate-8-phosphate + phosphate. Its pathway is carbohydrate biosynthesis; 3-deoxy-D-manno-octulosonate biosynthesis; 3-deoxy-D-manno-octulosonate from D-ribulose 5-phosphate: step 2/3. It participates in bacterial outer membrane biogenesis; lipopolysaccharide biosynthesis. This is 2-dehydro-3-deoxyphosphooctonate aldolase from Chromobacterium violaceum (strain ATCC 12472 / DSM 30191 / JCM 1249 / CCUG 213 / NBRC 12614 / NCIMB 9131 / NCTC 9757 / MK).